We begin with the raw amino-acid sequence, 102 residues long: Co-chaperonin GroES (102 aa).

This sequence belongs to the GroES chaperonin family. Heptamer of 7 subunits arranged in a ring. Interacts with the chaperonin GroEL.

It is found in the cytoplasm. Functionally, together with the chaperonin GroEL, plays an essential role in assisting protein folding. The GroEL-GroES system forms a nano-cage that allows encapsulation of the non-native substrate proteins and provides a physical environment optimized to promote and accelerate protein folding. GroES binds to the apical surface of the GroEL ring, thereby capping the opening of the GroEL channel. The polypeptide is Co-chaperonin GroES (Streptomyces coelicolor (strain ATCC BAA-471 / A3(2) / M145)).